The following is a 621-amino-acid chain: DNA-directed RNA polymerase subunit gamma (621 aa).

Residues Asp-463, Asp-465, and Asp-467 each coordinate Mg(2+).

The protein belongs to the RNA polymerase beta' chain family. RpoC1 subfamily. As to quaternary structure, in cyanobacteria the RNAP catalytic core is composed of 2 alpha, 1 beta, 1 beta', 1 gamma and 1 omega subunit. When a sigma factor is associated with the core the holoenzyme is formed, which can initiate transcription. It depends on Mg(2+) as a cofactor.

It carries out the reaction RNA(n) + a ribonucleoside 5'-triphosphate = RNA(n+1) + diphosphate. In terms of biological role, DNA-dependent RNA polymerase catalyzes the transcription of DNA into RNA using the four ribonucleoside triphosphates as substrates. The protein is DNA-directed RNA polymerase subunit gamma of Nostoc commune.